The following is a 170-amino-acid chain: Large ribosomal subunit protein uL10 (170 aa).

The protein belongs to the universal ribosomal protein uL10 family. In terms of assembly, part of the ribosomal stalk of the 50S ribosomal subunit. The N-terminus interacts with L11 and the large rRNA to form the base of the stalk. The C-terminus forms an elongated spine to which L12 dimers bind in a sequential fashion forming a multimeric L10(L12)X complex.

Its function is as follows. Forms part of the ribosomal stalk, playing a central role in the interaction of the ribosome with GTP-bound translation factors. This Lactobacillus acidophilus (strain ATCC 700396 / NCK56 / N2 / NCFM) protein is Large ribosomal subunit protein uL10.